Consider the following 270-residue polypeptide: Putative ABC transporter ATP-binding protein MG304 homolog (270 aa).

One can recognise an ABC transporter domain in the interval leucine 2–threonine 232. Glycine 36 to serine 43 contacts ATP.

This sequence belongs to the ABC transporter superfamily.

In Mycoplasma pneumoniae (strain ATCC 29342 / M129 / Subtype 1) (Mycoplasmoides pneumoniae), this protein is Putative ABC transporter ATP-binding protein MG304 homolog.